A 104-amino-acid polypeptide reads, in one-letter code: Membrane magnesium transporter (104 aa).

The Cytoplasmic portion of the chain corresponds to 1-2 (MN). The helical transmembrane segment at 3 to 23 (LGFLVGVFGVLILSHAAYSTI) threads the bilayer. Residues 24–40 (QYRGLLKIMEEEFSRPP) lie on the Lumenal side of the membrane. A helical membrane pass occupies residues 41-61 (INVILELIIGLALCMWAALTF). Over 62 to 104 (PGKFLSIHPDSDENRAVFLPDNSDFMIFNHRGRLFPPQIDMKF) the chain is Cytoplasmic.

Belongs to the membrane magnesium transporter (TC 1.A.67) family. Component of the ER membrane protein complex (EMC).

It is found in the endoplasmic reticulum membrane. The protein localises to the golgi apparatus membrane. It localises to the early endosome membrane. In terms of biological role, mediates Mg(2+) transport. The chain is Membrane magnesium transporter from Arabidopsis thaliana (Mouse-ear cress).